We begin with the raw amino-acid sequence, 138 residues long: Large ribosomal subunit protein bL17 (138 aa).

Belongs to the bacterial ribosomal protein bL17 family. As to quaternary structure, part of the 50S ribosomal subunit. Contacts protein L32.

The protein is Large ribosomal subunit protein bL17 of Methylorubrum extorquens (strain PA1) (Methylobacterium extorquens).